The following is a 142-amino-acid chain: Dynein light chain Tctex-type protein 2B (142 aa).

The protein belongs to the dynein light chain Tctex-type family. In terms of assembly, light chain of the cytoplasmic dynein complex 2, a multisubunit complex composed at least of eleven different proteins. The cytoplasmic dynein 2 complex consists of two catalytic heavy chains (HCs) and a number of non-catalytic subunits presented by intermediate chains (ICs), light intermediate chains (LICs) and light chains (LCs). Among them, a heavy chain (DYNC2H1), two intermediate chains (DYNC2I2 and DYNC2I1), a light intermediate chain (DYNC2LI1), and a light chain (DYNLT2B) are unique to the dynein-2 complex, but a subset of the light chains are also shared by dynein-1 and dynein-2 complexes. Interacts with DYNC2I1. The dimer DYNLT2B-DYNLT1/DYNLT3 interacts with DYNC2I1; this interaction is crucial for retrograde trafficking of ciliary proteins.

It is found in the dynein axonemal particle. In terms of biological role, acts as one of several non-catalytic accessory components of the cytoplasmic dynein 2 complex (dynein-2 complex), a motor protein complex that drives the movement of cargos along microtubules within cilia and flagella in concert with the intraflagellar transport (IFT) system. Required for proper retrograde ciliary transport. This chain is Dynein light chain Tctex-type protein 2B, found in Homo sapiens (Human).